A 92-amino-acid polypeptide reads, in one-letter code: Protein S100-B (92 aa).

Ser-2 carries the post-translational modification N-acetylserine. EF-hand domains are found at residues 13–48 and 49–84; these read DVFH…LEEI and KEQE…VTTA. His-16 is a Zn(2+) binding site. Ca(2+) contacts are provided by Ser-19 and Glu-22. His-26 is a Zn(2+) binding site. The Ca(2+) site is built by Lys-27, Glu-32, Asp-62, Asp-64, Asp-66, Glu-68, and Glu-73. Residues His-86 and His-91 each contribute to the Zn(2+) site.

Belongs to the S-100 family. As to quaternary structure, dimer of either two alpha chains, or two beta chains, or one alpha and one beta chain. The S100B dimer binds two molecules of STK38. Interacts with CACYBP in a calcium-dependent manner. Interacts with ATAD3A; this interaction probably occurs in the cytosol prior to ATAD3A mitochondrial targeting. Interacts with S100A6. The S100B dimer interacts with two molecules of CAPZA1. Interacts with AGER. Interacts with PPP5C (via TPR repeats); the interaction is calcium-dependent and modulates PPP5C activity. Interacts with TPPP; this interaction inhibits TPPP dimerization. Interacts with isoform CLSTN3beta of CLSTN3; interaction promotes secretion. In terms of tissue distribution, although predominant among the water-soluble brain proteins, S100 is also found in a variety of other tissues.

It is found in the cytoplasm. The protein resides in the nucleus. It localises to the secreted. Its function is as follows. Small zinc- and- and calcium-binding protein that is highly expressed in astrocytes and constitutes one of the most abundant soluble proteins in brain. Weakly binds calcium but binds zinc very tightly-distinct binding sites with different affinities exist for both ions on each monomer. Physiological concentrations of potassium ion antagonize the binding of both divalent cations, especially affecting high-affinity calcium-binding sites. Acts as a neurotrophic factor that promotes astrocytosis and axonal proliferation. Involved in innervation of thermogenic adipose tissue by acting as an adipocyte-derived neurotrophic factor that promotes sympathetic innervation of adipose tissue. Binds to and initiates the activation of STK38 by releasing autoinhibitory intramolecular interactions within the kinase. Interaction with AGER after myocardial infarction may play a role in myocyte apoptosis by activating ERK1/2 and p53/TP53 signaling. Could assist ATAD3A cytoplasmic processing, preventing aggregation and favoring mitochondrial localization. May mediate calcium-dependent regulation on many physiological processes by interacting with other proteins, such as TPR-containing proteins, and modulating their activity. The sequence is that of Protein S100-B from Rattus norvegicus (Rat).